Here is a 558-residue protein sequence, read N- to C-terminus: Formate--tetrahydrofolate ligase (558 aa).

67 to 74 (TPAGEGKT) provides a ligand contact to ATP.

This sequence belongs to the formate--tetrahydrofolate ligase family.

The enzyme catalyses (6S)-5,6,7,8-tetrahydrofolate + formate + ATP = (6R)-10-formyltetrahydrofolate + ADP + phosphate. It functions in the pathway one-carbon metabolism; tetrahydrofolate interconversion. In Sphingobium sp. (strain NBRC 103272 / SYK-6), this protein is Formate--tetrahydrofolate ligase.